The chain runs to 131 residues: Maturin (131 aa).

Y34 carries the post-translational modification Phosphotyrosine. The span at 107 to 120 (FEEYSADVEEEEPE) shows a compositional bias: acidic residues. The segment at 107-131 (FEEYSADVEEEEPEADHPQMGVSQQ) is disordered.

This sequence belongs to the MTURN family. Post-translationally, phosphorylation at Tyr-34 is essential for its ability to promote megakaryocyte differentiation.

The protein localises to the cytoplasm. Promotes megakaryocyte differentiation by enhancing ERK and JNK signaling as well as up-regulating RUNX1 and FLI1 expression. Represses NF-kappa-B transcriptional activity by inhibiting phosphorylation of RELA at 'Ser- 536'. May be involved in early neuronal development. This is Maturin (MTURN) from Bos taurus (Bovine).